The sequence spans 95 residues: Cell division protein FtsB (95 aa).

Over 1–3 the chain is Cytoplasmic; it reads MKW. A helical membrane pass occupies residues 4–21; the sequence is VTGLLVVLLLGLQYKLWI. At 22 to 95 the chain is on the periplasmic side; that stretch reads GEGSVAEVWQ…QVVGRPGETP (74 aa). Residues 26–73 are a coiled coil; sequence VAEVWQLRQTLEAQRAENEELRYRNAALDAEVTDLKTGLDAIEERARR.

This sequence belongs to the FtsB family. As to quaternary structure, part of a complex composed of FtsB, FtsL and FtsQ.

It localises to the cell inner membrane. Its function is as follows. Essential cell division protein. May link together the upstream cell division proteins, which are predominantly cytoplasmic, with the downstream cell division proteins, which are predominantly periplasmic. The polypeptide is Cell division protein FtsB (Thioalkalivibrio sulfidiphilus (strain HL-EbGR7)).